Consider the following 597-residue polypeptide: DNA ligase (597 aa).

Glutamate 262 is a binding site for ATP. Lysine 264 (N6-AMP-lysine intermediate) is an active-site residue. Residues arginine 269, arginine 284, glutamate 314, phenylalanine 354, arginine 431, and lysine 437 each contribute to the ATP site.

This sequence belongs to the ATP-dependent DNA ligase family. The cofactor is Mg(2+). Mn(2+) is required as a cofactor.

It catalyses the reaction ATP + (deoxyribonucleotide)n-3'-hydroxyl + 5'-phospho-(deoxyribonucleotide)m = (deoxyribonucleotide)n+m + AMP + diphosphate.. It carries out the reaction ADP + (deoxyribonucleotide)n-3'-hydroxyl + 5'-phospho-(deoxyribonucleotide)m = (deoxyribonucleotide)n+m + AMP + phosphate.. The enzyme catalyses GTP + (deoxyribonucleotide)n-3'-hydroxyl + 5'-phospho-(deoxyribonucleotide)m = (deoxyribonucleotide)n+m + GMP + diphosphate.. With respect to regulation, inhibited by Ca(2+) and Zn(2+). In terms of biological role, DNA ligase that seals nicks in double-stranded DNA during DNA replication, DNA recombination and DNA repair. Can use both ATP and ADP. This chain is DNA ligase, found in Staphylothermus marinus (strain ATCC 43588 / DSM 3639 / JCM 9404 / F1).